Consider the following 330-residue polypeptide: G-protein coupled bile acid receptor 1 (330 aa).

The Extracellular portion of the chain corresponds to 1-19 (MTPNSTGEVPGPIPRGALE). A glycan (N-linked (GlcNAc...) asparagine) is linked at Asn-4. A helical transmembrane segment spans residues 20 to 40 (LSLALASLIIAANLLLALGIA). The Cytoplasmic segment spans residues 41–50 (CDRRLRSPPA). A helical transmembrane segment spans residues 51–71 (GCFFLSLLLAGLLTGLALPTL). Over 72–85 (PGLWRQSHRGYWSC) the chain is Extracellular. Cys-85 and Cys-155 are joined by a disulfide. The chain crosses the membrane as a helical span at residues 86 to 106 (LLVYLAPNFSFLSLLANLLLV). Topologically, residues 107–125 (HGERYVAVLRPLQPPGSIR) are cytoplasmic. Residues 126-146 (LALLLTWTGPLLFASLPALGW) form a helical membrane-spanning segment. The Extracellular segment spans residues 147 to 169 (NHWGPEANCSSQTIFPAPYLYLE). An N-linked (GlcNAc...) asparagine glycan is attached at Asn-154. The helical transmembrane segment at 170–190 (VYGLLLPAVGAAALLSAHVLL) threads the bilayer. Over 191 to 230 (AAHRQLQDIRRLERAVCRDAPSALARALTWRQARAQAGAT) the chain is Cytoplasmic. A helical transmembrane segment spans residues 231–251 (LLFGLCWGPYVATLFLSVLAY). Topologically, residues 252 to 261 (EQRPPLGPGT) are extracellular. The helical transmembrane segment at 262 to 282 (LLSLLSLGSASAAAVPVAMGL) threads the bilayer. Topologically, residues 283-330 (GDHRYTAPWRAAARRWLRGLRGRGSQASPGPSTAYHTSSQSSVDVDLN) are cytoplasmic. Positions 304–330 (GRGSQASPGPSTAYHTSSQSSVDVDLN) are disordered. A compositionally biased stretch (polar residues) spans 307–330 (SQASPGPSTAYHTSSQSSVDVDLN).

Belongs to the G-protein coupled receptor 1 family. Expressed at high level in spleen. Expressed at lower level in thymus, heart, lung, liver, kidney, ileum, blood and adherent alveolar macrophage cells.

It is found in the cell membrane. In terms of biological role, receptor for bile acid. Bile-acid binding induces its internalization, activation of extracellular signal-regulated kinase and intracellular cAMP production. May be involved in the suppression of macrophage functions by bile acids. Involved in bile acid promoted GLP1R secretion. The protein is G-protein coupled bile acid receptor 1 (GPBAR1) of Oryctolagus cuniculus (Rabbit).